Reading from the N-terminus, the 126-residue chain is Histone H2B type 1-C/E/G (126 aa).

The segment covering 1–12 (MPEPAKSAPAPK) has biased composition (low complexity). The tract at residues 1–36 (MPEPAKSAPAPKKGSKKAVTKAQKKDGKKRKRSRKE) is disordered. P2 carries the N-acetylproline modification. Position 3 is an ADP-ribosyl glutamic acid (E3). K6 is subject to N6-(2-hydroxyisobutyryl)lysine; alternate. K6 carries the N6-(beta-hydroxybutyryl)lysine; alternate modification. K6 carries the N6-acetyllysine; alternate modification. K6 is subject to N6-butyryllysine; alternate. K6 is modified (N6-crotonyllysine; alternate). N6-lactoyllysine; alternate is present on K6. A Glycyl lysine isopeptide (Lys-Gly) (interchain with G-Cter in SUMO2); alternate cross-link involves residue K6. An ADP-ribosylserine modification is found at S7. K12 is subject to N6-(beta-hydroxybutyryl)lysine; alternate. N6-acetyllysine; alternate is present on residues K12 and K13. N6-crotonyllysine; alternate is present on residues K12 and K13. K12 carries the N6-lactoyllysine; alternate modification. K13 is subject to N6-(2-hydroxyisobutyryl)lysine; alternate. At S15 the chain carries Phosphoserine; by STK4/MST1. An N6-acetyllysine; alternate mark is found at K16, K17, K21, and K24. 4 positions are modified to N6-crotonyllysine; alternate: K16, K17, K21, and K24. Residues K16, K17, K21, and K24 each carry the N6-lactoyllysine; alternate modification. K17 bears the N6-glutaryllysine; alternate mark. An N6-(2-hydroxyisobutyryl)lysine; alternate mark is found at K21 and K24. An N6-(beta-hydroxybutyryl)lysine; alternate modification is found at K21. K21 carries the N6-butyryllysine; alternate modification. Residue K21 forms a Glycyl lysine isopeptide (Lys-Gly) (interchain with G-Cter in SUMO2); alternate linkage. The residue at position 25 (K25) is an N6-(2-hydroxyisobutyryl)lysine. Residue K35 is modified to N6-(2-hydroxyisobutyryl)lysine; alternate. K35 carries the N6-(beta-hydroxybutyryl)lysine; alternate modification. The residue at position 35 (K35) is an N6-crotonyllysine; alternate. K35 carries the post-translational modification N6-glutaryllysine; alternate. The residue at position 35 (K35) is an N6-succinyllysine; alternate. Residue K35 forms a Glycyl lysine isopeptide (Lys-Gly) (interchain with G-Cter in ubiquitin); alternate linkage. The residue at position 36 (E36) is a PolyADP-ribosyl glutamic acid. Phosphoserine; by AMPK is present on S37. Residues K44, K47, and K58 each carry the N6-(2-hydroxyisobutyryl)lysine; alternate modification. K44 is subject to N6-lactoyllysine; alternate. K44 and K47 each carry N6-glutaryllysine; alternate. K47 is modified (N6-methyllysine; alternate). K58 is modified (N6,N6-dimethyllysine; alternate). R80 is subject to Dimethylated arginine. An N6-(2-hydroxyisobutyryl)lysine; alternate modification is found at K86. K86 carries the post-translational modification N6-acetyllysine; alternate. Position 86 is an N6-lactoyllysine; alternate (K86). An N6,N6,N6-trimethyllysine; alternate modification is found at K86. 2 positions are modified to omega-N-methylarginine: R87 and R93. K109 carries the post-translational modification N6-(2-hydroxyisobutyryl)lysine; alternate. K109 is modified (N6-(beta-hydroxybutyryl)lysine; alternate). K109 is subject to N6-lactoyllysine; alternate. K109 is subject to N6-glutaryllysine; alternate. Position 109 is an N6-methyllysine; alternate (K109). A glycan (O-linked (GlcNAc) serine) is linked at S113. T116 bears the Phosphothreonine mark. Residues K117 and K121 each carry the N6-(2-hydroxyisobutyryl)lysine; alternate modification. An N6-(beta-hydroxybutyryl)lysine; alternate modification is found at K117. An N6-lactoyllysine; alternate mark is found at K117 and K121. N6-glutaryllysine; alternate occurs at positions 117 and 121. Residues K117 and K121 each carry the N6-succinyllysine; alternate modification. K117 is subject to N6-methylated lysine; alternate. Residue K121 forms a Glycyl lysine isopeptide (Lys-Gly) (interchain with G-Cter in ubiquitin); alternate linkage.

Belongs to the histone H2B family. As to quaternary structure, the nucleosome is a histone octamer containing two molecules each of H2A, H2B, H3 and H4 assembled in one H3-H4 heterotetramer and two H2A-H2B heterodimers. The octamer wraps approximately 147 bp of DNA. Interacts with VRK1; the interaction is mediated by the nucleosome acidic patch, a cluster of negatively charged residues of H2A and H2B forming a cleft within the nucleosome core. Post-translationally, monoubiquitination at Lys-35 (H2BK34Ub) by the MSL1/MSL2 dimer is required for histone H3 'Lys-4' (H3K4me) and 'Lys-79' (H3K79me) methylation and transcription activation at specific gene loci, such as HOXA9 and MEIS1 loci. Similarly, monoubiquitination at Lys-121 (H2BK120Ub) by the RNF20/40 complex gives a specific tag for epigenetic transcriptional activation and is also prerequisite for histone H3 'Lys-4' and 'Lys-79' methylation. It also functions cooperatively with the FACT dimer to stimulate elongation by RNA polymerase II. H2BK120Ub also acts as a regulator of mRNA splicing: deubiquitination by USP49 is required for efficient cotranscriptional splicing of a large set of exons. Phosphorylated on Ser-15 (H2BS14ph) by STK4/MST1 during apoptosis; which facilitates apoptotic chromatin condensation. Also phosphorylated on Ser-15 in response to DNA double strand breaks (DSBs), and in correlation with somatic hypermutation and immunoglobulin class-switch recombination. Phosphorylation at Ser-37 (H2BS36ph) by AMPK in response to stress promotes transcription. In terms of processing, glcNAcylation at Ser-113 promotes monoubiquitination of Lys-121. It fluctuates in response to extracellular glucose, and associates with transcribed genes. Post-translationally, ADP-ribosylated by PARP1 or PARP2 on Ser-7 (H2BS6ADPr) in response to DNA damage. H2BS6ADPr promotes recruitment of CHD1L. Mono-ADP-ribosylated on Glu-3 (H2BE2ADPr) by PARP3 in response to single-strand breaks. Poly ADP-ribosylation on Glu-36 (H2BE35ADPr) by PARP1 regulates adipogenesis: it inhibits phosphorylation at Ser-37 (H2BS36ph), thereby blocking expression of pro-adipogenetic genes. Crotonylation (Kcr) is specifically present in male germ cells and marks testis-specific genes in post-meiotic cells, including X-linked genes that escape sex chromosome inactivation in haploid cells. Crotonylation marks active promoters and enhancers and confers resistance to transcriptional repressors. It is also associated with post-meiotically activated genes on autosomes. In terms of processing, hydroxybutyrylation of histones is induced by starvation. Post-translationally, lactylated in macrophages by EP300/P300 by using lactoyl-CoA directly derived from endogenous or exogenous lactate, leading to stimulates gene transcription.

The protein resides in the nucleus. Its subcellular location is the chromosome. In terms of biological role, core component of nucleosome. Nucleosomes wrap and compact DNA into chromatin, limiting DNA accessibility to the cellular machineries which require DNA as a template. Histones thereby play a central role in transcription regulation, DNA repair, DNA replication and chromosomal stability. DNA accessibility is regulated via a complex set of post-translational modifications of histones, also called histone code, and nucleosome remodeling. The chain is Histone H2B type 1-C/E/G from Mus musculus (Mouse).